The chain runs to 72 residues: Neuropeptide SIFamide (72 aa).

A signal peptide spans 1-26; that stretch reads MALRFTLTLLLVTILVAAILLGSSEA. The N-linked (GlcNAc...) asparagine glycan is linked to Asn-34. Phe-38 carries the post-translational modification Phenylalanine amide. Positions 42 to 72 are excised as a propeptide; it reads NSLDYDSAKMSAVCEVAMEACPMWFPQNDSK.

This sequence belongs to the FARP (FMRFamide related peptide) family. As to expression, strongly expressed in two pairs of neurons in the pars intercerebralis (at protein level).

The protein localises to the secreted. In terms of biological role, ligand for the neuropeptide SIFamide receptor. Modulates sexual behavior by negatively regulating female receptivity to male courtship and by playing a role in male sex discrimination. Also involved in promoting sleep. This chain is Neuropeptide SIFamide, found in Drosophila melanogaster (Fruit fly).